Here is a 295-residue protein sequence, read N- to C-terminus: Cytidine deaminase (295 aa).

CMP/dCMP-type deaminase domains follow at residues 48–168 and 187–295; these read SDKE…FGPA and DDKD…FVNV. Substrate is bound at residue 89–91; that stretch reads NME. His-102 provides a ligand contact to Zn(2+). The active-site Proton donor is Glu-104. Zn(2+)-binding residues include Cys-129 and Cys-132.

This sequence belongs to the cytidine and deoxycytidylate deaminase family. In terms of assembly, homodimer. Requires Zn(2+) as cofactor.

It carries out the reaction cytidine + H2O + H(+) = uridine + NH4(+). It catalyses the reaction 2'-deoxycytidine + H2O + H(+) = 2'-deoxyuridine + NH4(+). This enzyme scavenges exogenous and endogenous cytidine and 2'-deoxycytidine for UMP synthesis. The protein is Cytidine deaminase of Vibrio parahaemolyticus serotype O3:K6 (strain RIMD 2210633).